We begin with the raw amino-acid sequence, 357 residues long: Ribosomal RNA large subunit methyltransferase M (357 aa).

Residues S183, 216 to 219 (APGG), D235, D255, and D271 contribute to the S-adenosyl-L-methionine site. Residue K300 is the Proton acceptor of the active site.

Belongs to the class I-like SAM-binding methyltransferase superfamily. RNA methyltransferase RlmE family. RlmM subfamily. Monomer.

It is found in the cytoplasm. It catalyses the reaction cytidine(2498) in 23S rRNA + S-adenosyl-L-methionine = 2'-O-methylcytidine(2498) in 23S rRNA + S-adenosyl-L-homocysteine + H(+). Catalyzes the 2'-O-methylation at nucleotide C2498 in 23S rRNA. The chain is Ribosomal RNA large subunit methyltransferase M from Pseudomonas fluorescens (strain Pf0-1).